The following is a 39-amino-acid chain: Cytochrome b6-f complex subunit 5 (39 aa).

The chain crosses the membrane as a helical span at residues 5–25 (LLCGIVLGLVPITLLGLFVAA).

It belongs to the PetG family. In terms of assembly, the 4 large subunits of the cytochrome b6-f complex are cytochrome b6, subunit IV (17 kDa polypeptide, PetD), cytochrome f and the Rieske protein, while the 4 small subunits are PetG, PetL, PetM and PetN. The complex functions as a dimer.

Its subcellular location is the cellular thylakoid membrane. Functionally, component of the cytochrome b6-f complex, which mediates electron transfer between photosystem II (PSII) and photosystem I (PSI), cyclic electron flow around PSI, and state transitions. PetG is required for either the stability or assembly of the cytochrome b6-f complex. This is Cytochrome b6-f complex subunit 5 from Prochlorococcus marinus (strain SARG / CCMP1375 / SS120).